A 296-amino-acid chain; its full sequence is NAD kinase (296 aa).

The active-site Proton acceptor is D74. NAD(+) is bound by residues 74 to 75, 148 to 149, R176, D178, and 189 to 194; these read DG, ND, and TAYALS.

Belongs to the NAD kinase family. A divalent metal cation is required as a cofactor.

It is found in the cytoplasm. It carries out the reaction NAD(+) + ATP = ADP + NADP(+) + H(+). Functionally, involved in the regulation of the intracellular balance of NAD and NADP, and is a key enzyme in the biosynthesis of NADP. Catalyzes specifically the phosphorylation on 2'-hydroxyl of the adenosine moiety of NAD to yield NADP. The protein is NAD kinase of Nitrosomonas eutropha (strain DSM 101675 / C91 / Nm57).